The chain runs to 360 residues: Inward rectifier potassium channel 13 (360 aa).

Residues 1-50 are Cytoplasmic-facing; that stretch reads MESSNCKVITPLLSQRHRRMVTKDGHSTLQTDGAPRGLVYLRDAWGTLID. Residues 51–77 traverse the membrane as a helical segment; that stretch reads MRWRWVMLVFSASFVLHWLVFAVLWYV. Residues 78–105 are Extracellular-facing; that stretch reads LAEMNGDLELDHDAPPENHTICVKYITS. The segment at residues 106 to 122 is an intramembrane region (helical; Pore-forming); it reads FTAAFSFSLETQLTIGY. A Selectivity filter motif is present at residues 119–124; the sequence is TIGYGT. Residues 123 to 131 lie on the Extracellular side of the membrane; sequence GTMFPSGDC. The helical transmembrane segment at 132–157 threads the bilayer; it reads PSAIALLAIQMLLGLMLEAFITGAFV. Over 158–360 the chain is Cytoplasmic; that stretch reads AKIARPKNRA…FQISETGLTE (203 aa). Position 201 is a phosphoserine; by PKC (Ser201). Ser287 bears the Phosphoserine; by PKA mark.

This sequence belongs to the inward rectifier-type potassium channel (TC 1.A.2.1) family. KCNJ13 subfamily. Homotetramer. Phosphorylation at Ser-201 by PKC strongly inhibits ionic currents, while phosphorylation at Ser-287 by PKA increases them.

It is found in the membrane. It localises to the cell membrane. The catalysed reaction is K(+)(in) = K(+)(out). Inhibited by Ba(2+) and Cs(+), although sensitivity to those inhibitors is much lower than in other Kir channels. Its function is as follows. Inward rectifier potassium channels are characterized by a greater tendency to allow potassium to flow into the cell rather than out of it. Their voltage dependence is regulated by the concentration of extracellular potassium; as external potassium is raised, the voltage range of the channel opening shifts to more positive voltages. The inward rectification is mainly due to the blockage of outward current by internal magnesium. KCNJ13 has a very low single channel conductance, low sensitivity to block by external barium and cesium, and no dependence of its inward rectification properties on the internal blocking particle magnesium. The protein is Inward rectifier potassium channel 13 (KCNJ13) of Cavia porcellus (Guinea pig).